The primary structure comprises 95 residues: Alpha-bungarotoxin, isoform A31 (95 aa).

The signal sequence occupies residues 1–21; it reads MKTLLLTLVVVTIVCLDLGYT. 5 disulfides stabilise this stretch: Cys24/Cys44, Cys37/Cys65, Cys50/Cys54, Cys69/Cys80, and Cys81/Cys86.

It belongs to the three-finger toxin family. Long-chain subfamily. Type II alpha-neurotoxin sub-subfamily. As to quaternary structure, monomer in solution, homodimer in crystal state. Expressed by the venom gland.

The protein localises to the secreted. Functionally, binds with high affinity to muscular (tested on Torpedo marmorata, Kd=0.4 nM) and neuronal (tested on chimeric alpha-7/CHRNA7, Kd=0.95 nM) nicotinic acetylcholine receptor (nAChR) and inhibits acetylcholine from binding to the receptor, thereby impairing neuromuscular and neuronal transmission. It also shows an activity on GABA(A) receptors. It antagonises GABA-activated currents with high potency when tested on primary hippocampal neurons. It inhibits recombinantly expressed GABA(A) receptors composed of alpha-2-beta-2-gamma-2 (GABRA2-GABRB2-GABRG2) subunits with high potency (62.3% inhibition at 20 uM of toxin). It also shows a weaker inhibition on GABA(A) receptors composed of alpha-1-beta-2-gamma-2 (GABRA1-GABRB2-GABRG2) subunits, alpha-4-beta-2-gamma-2 (GABRA4-GABRB2-GABRG2) subunits, and alpha-5-beta-2-gamma-2 (GABRA5-GABRB2-GABRG2) subunits. A very weak inhibition is also observed on GABA(A) receptor composed of alpha-1-beta-3-gamma-2 (GABRA1-GABRB3-GABRG2). It has also been shown to bind and inhibit recombinant GABA(A) receptor beta-3/GABRB3 subunit (Kd=about 50 nM). In addition, it blocks the extracellular increase of dopamine evoked by nicotine only at the higher dose (4.2 uM). In vivo, when intraperitoneally injected into mice, induces flaccid paralysis of the limbs and respiratory distress, and causes death in a dose-dependent manner. The chain is Alpha-bungarotoxin, isoform A31 from Bungarus candidus (Malayan krait).